The following is a 689-amino-acid chain: DNA ligase (689 aa).

NAD(+) contacts are provided by residues 40-44 (DSEYD), 89-90 (SL), and E121. Residue K123 is the N6-AMP-lysine intermediate of the active site. 4 residues coordinate NAD(+): R144, E179, K295, and K319. Positions 413, 416, 431, and 437 each coordinate Zn(2+). Residues 610–689 (REQSSLTDKI…EEWLTLIKNV (80 aa)) form the BRCT domain.

It belongs to the NAD-dependent DNA ligase family. LigA subfamily. It depends on Mg(2+) as a cofactor. Mn(2+) serves as cofactor.

It catalyses the reaction NAD(+) + (deoxyribonucleotide)n-3'-hydroxyl + 5'-phospho-(deoxyribonucleotide)m = (deoxyribonucleotide)n+m + AMP + beta-nicotinamide D-nucleotide.. Functionally, DNA ligase that catalyzes the formation of phosphodiester linkages between 5'-phosphoryl and 3'-hydroxyl groups in double-stranded DNA using NAD as a coenzyme and as the energy source for the reaction. It is essential for DNA replication and repair of damaged DNA. This chain is DNA ligase, found in Rickettsia massiliae (strain Mtu5).